We begin with the raw amino-acid sequence, 187 residues long: Elongation factor P (187 aa).

This sequence belongs to the elongation factor P family.

The protein localises to the cytoplasm. It functions in the pathway protein biosynthesis; polypeptide chain elongation. Its function is as follows. Involved in peptide bond synthesis. Stimulates efficient translation and peptide-bond synthesis on native or reconstituted 70S ribosomes in vitro. Probably functions indirectly by altering the affinity of the ribosome for aminoacyl-tRNA, thus increasing their reactivity as acceptors for peptidyl transferase. This chain is Elongation factor P, found in Paenarthrobacter aurescens (strain TC1).